The chain runs to 475 residues: Dynein regulatory complex subunit 4 (475 aa).

A disordered region spans residues 1–22 (MPPKRKSSPKGKTPTVVDGLST). A regulates microtubule-binding region spans residues 1–113 (MPPKRKSSPK…LLYEQQNMLS (113 aa)). Coiled-coil stretches lie at residues 20 to 104 (LSTE…VKHL), 142 to 200 (RSLK…QEEE), and 242 to 426 (KNLD…VARV). The tract at residues 114-257 (ELKAESIIST…TSLKEELKEM (144 aa)) is microtubule-binding.

Belongs to the DRC4 family. Component of the nexin-dynein regulatory complex (N-DRC). Interacts with microtubules.

It localises to the cytoplasm. The protein resides in the cytoskeleton. The protein localises to the cell projection. It is found in the cilium. Its subcellular location is the flagellum. It localises to the cilium axoneme. The protein resides in the cilium basal body. The protein localises to the golgi apparatus. It is found in the flagellum axoneme. Its function is as follows. Component of the nexin-dynein regulatory complex (N-DRC), a key regulator of ciliary/flagellar motility which maintains the alignment and integrity of the distal axoneme and regulates microtubule sliding in motile axonemes. Plays an important role in the assembly of the N-DRC linker. Plays dual roles at both the primary (or non-motile) cilia to regulate hedgehog signaling and in motile cilia to coordinate cilia movement. Required for proper slow muscle development and positively regulates ciliary smoothened (SMO)-dependent Hedgehog (Hh) signaling pathway. Required for tether cilia motility which is essential for normal otolith formation and localization in the developing inner ear. This Danio rerio (Zebrafish) protein is Dynein regulatory complex subunit 4 (gas8).